A 904-amino-acid polypeptide reads, in one-letter code: Dual specificity tyrosine-phosphorylation-regulated kinase mbk-1 (904 aa).

Disordered regions lie at residues 1–151, 250–272, and 285–345; these read MNSG…MPPE, TVGR…ASSS, and AVPN…YNNG. Over residues 9 to 23 the composition is skewed to polar residues; it reads NLQAWGQQPSSSYSN. Low complexity predominate over residues 24 to 35; sequence TQQQHGQITGQI. Residues 59–75 show a composition bias toward basic and acidic residues; the sequence is ELEKSKKIAEQPTEHPQ. Positions 112–123 are enriched in low complexity; sequence NNSNSQNFFPQQ. Residues 286–297 show a composition bias toward polar residues; sequence VPNTSSSGNQPH. Residues 367–690 form the Protein kinase domain; sequence ILSDTPVGKG…TLFPVSHTAY (324 aa). ATP is bound by residues 373-381 and K396; that span reads VGKGSFGQV. D495 serves as the catalytic Proton acceptor. Disordered regions lie at residues 717–830 and 881–904; these read YRPV…DQAE and MSHG…NNKL. Residues 721–733 show a composition bias toward polar residues; it reads PTSSHPISVTSSF. The segment covering 749 to 820 has biased composition (low complexity); the sequence is SQQNYHNPNY…VQQHSSSSSR (72 aa). A compositionally biased stretch (polar residues) spans 881–890; sequence MSHGNVNAGS. The span at 892–904 shows a compositional bias: basic and acidic residues; it reads RDMEKHDYPNNKL.

The protein belongs to the protein kinase superfamily. CMGC Ser/Thr protein kinase family. MNB/DYRK subfamily. Requires Mg(2+) as cofactor.

It localises to the nucleus. The catalysed reaction is L-seryl-[protein] + ATP = O-phospho-L-seryl-[protein] + ADP + H(+). It carries out the reaction L-threonyl-[protein] + ATP = O-phospho-L-threonyl-[protein] + ADP + H(+). The enzyme catalyses L-tyrosyl-[protein] + ATP = O-phospho-L-tyrosyl-[protein] + ADP + H(+). Functionally, possible role in the function of olfactory neurons. The polypeptide is Dual specificity tyrosine-phosphorylation-regulated kinase mbk-1 (Caenorhabditis briggsae).